Here is a 485-residue protein sequence, read N- to C-terminus: Glutamyl-tRNA(Gln) amidotransferase subunit A (485 aa).

Active-site charge relay system residues include lysine 79 and serine 154. Serine 178 (acyl-ester intermediate) is an active-site residue.

Belongs to the amidase family. GatA subfamily. In terms of assembly, heterotrimer of A, B and C subunits.

It catalyses the reaction L-glutamyl-tRNA(Gln) + L-glutamine + ATP + H2O = L-glutaminyl-tRNA(Gln) + L-glutamate + ADP + phosphate + H(+). Its function is as follows. Allows the formation of correctly charged Gln-tRNA(Gln) through the transamidation of misacylated Glu-tRNA(Gln) in organisms which lack glutaminyl-tRNA synthetase. The reaction takes place in the presence of glutamine and ATP through an activated gamma-phospho-Glu-tRNA(Gln). This is Glutamyl-tRNA(Gln) amidotransferase subunit A from Geobacillus stearothermophilus (Bacillus stearothermophilus).